A 658-amino-acid polypeptide reads, in one-letter code: Phosphomethylpyrimidine synthase (658 aa).

Positions 1-22 are disordered; sequence MNNSTDAVNPAKKPQTRREKRE. Residues Asn248, Met277, Tyr306, His342, 362 to 364, 403 to 406, and Glu442 each bind substrate; these read SRG and DGLR. His446 serves as a coordination point for Zn(2+). Substrate is bound at residue Tyr469. His510 contributes to the Zn(2+) binding site. [4Fe-4S] cluster contacts are provided by Cys590, Cys593, and Cys598.

It belongs to the ThiC family. As to quaternary structure, homodimer. The cofactor is [4Fe-4S] cluster.

The catalysed reaction is 5-amino-1-(5-phospho-beta-D-ribosyl)imidazole + S-adenosyl-L-methionine = 4-amino-2-methyl-5-(phosphooxymethyl)pyrimidine + CO + 5'-deoxyadenosine + formate + L-methionine + 3 H(+). It functions in the pathway cofactor biosynthesis; thiamine diphosphate biosynthesis. Functionally, catalyzes the synthesis of the hydroxymethylpyrimidine phosphate (HMP-P) moiety of thiamine from aminoimidazole ribotide (AIR) in a radical S-adenosyl-L-methionine (SAM)-dependent reaction. This Colwellia psychrerythraea (strain 34H / ATCC BAA-681) (Vibrio psychroerythus) protein is Phosphomethylpyrimidine synthase.